Consider the following 188-residue polypeptide: Phosphoribosylglycinamide formyltransferase (188 aa).

A N(1)-(5-phospho-beta-D-ribosyl)glycinamide-binding site is contributed by 12–14; that stretch reads GSN. Residues Lys66, 91 to 94, and Asn108 each bind (6R)-10-formyltetrahydrofolate; that span reads MRLI. Catalysis depends on His110, which acts as the Proton donor.

This sequence belongs to the GART family.

It carries out the reaction N(1)-(5-phospho-beta-D-ribosyl)glycinamide + (6R)-10-formyltetrahydrofolate = N(2)-formyl-N(1)-(5-phospho-beta-D-ribosyl)glycinamide + (6S)-5,6,7,8-tetrahydrofolate + H(+). It participates in purine metabolism; IMP biosynthesis via de novo pathway; N(2)-formyl-N(1)-(5-phospho-D-ribosyl)glycinamide from N(1)-(5-phospho-D-ribosyl)glycinamide (10-formyl THF route): step 1/1. Catalyzes the transfer of a formyl group from 10-formyltetrahydrofolate to 5-phospho-ribosyl-glycinamide (GAR), producing 5-phospho-ribosyl-N-formylglycinamide (FGAR) and tetrahydrofolate. This is Phosphoribosylglycinamide formyltransferase from Staphylococcus aureus (strain COL).